Here is a 420-residue protein sequence, read N- to C-terminus: WD repeat-containing protein jip5 (420 aa).

6 WD repeats span residues 9 to 48 (PLSA…VDSD), 72 to 111 (RHKG…VENK), 117 to 158 (DKNG…SKVS), 221 to 262 (VSSV…DQDE), 271 to 314 (GGGE…VVSE), and 318 to 355 (DETE…GDGV). The disordered stretch occupies residues 39 to 63 (RLPSDEVDSDDDGASTSSSRTGRGH). The tract at residues 350-420 (DSGDGVNGNE…QAVMAFHDLD (71 aa)) is disordered. Acidic residues predominate over residues 368–387 (DDSDEDSDDGDDDDDSGDSD). Over residues 394-406 (DARKKRKKGKTPK) the composition is skewed to basic residues.

Belongs to the WD repeat WDR55 family.

It is found in the nucleus. The protein localises to the nucleolus. The chain is WD repeat-containing protein jip5 (jip5) from Aspergillus terreus (strain NIH 2624 / FGSC A1156).